The following is a 401-amino-acid chain: Proline-rich protein 30 (401 aa).

The segment covering Pro69–Asp80 has biased composition (polar residues). Disordered regions lie at residues Pro69–Ser93, Ser129–Gly191, and Gln357–Ser401. Low complexity-rich tracts occupy residues Pro83–Ser93 and Ser129–Ser147. Polar residues-rich tracts occupy residues Arg148–Ser186 and Gln357–Leu368.

In Mus musculus (Mouse), this protein is Proline-rich protein 30 (Prr30).